A 595-amino-acid polypeptide reads, in one-letter code: Elongation factor 4 (595 aa).

The region spanning 2-183 (KNIRNFCIIA…TIVEKVPAPK (182 aa)) is the tr-type G domain. GTP contacts are provided by residues 14-19 (DHGKST) and 130-133 (NKID).

This sequence belongs to the TRAFAC class translation factor GTPase superfamily. Classic translation factor GTPase family. LepA subfamily.

It is found in the cell inner membrane. The catalysed reaction is GTP + H2O = GDP + phosphate + H(+). Functionally, required for accurate and efficient protein synthesis under certain stress conditions. May act as a fidelity factor of the translation reaction, by catalyzing a one-codon backward translocation of tRNAs on improperly translocated ribosomes. Back-translocation proceeds from a post-translocation (POST) complex to a pre-translocation (PRE) complex, thus giving elongation factor G a second chance to translocate the tRNAs correctly. Binds to ribosomes in a GTP-dependent manner. The sequence is that of Elongation factor 4 from Parabacteroides distasonis (strain ATCC 8503 / DSM 20701 / CIP 104284 / JCM 5825 / NCTC 11152).